The primary structure comprises 413 residues: Aspartate aminotransferase, cytoplasmic (413 aa).

G39 and W141 together coordinate L-aspartate. A Phosphoserine modification is found at S149. N195 contributes to the L-aspartate binding site. At K259 the chain carries N6-(pyridoxal phosphate)lysine. Position 387 (R387) interacts with L-aspartate.

This sequence belongs to the class-I pyridoxal-phosphate-dependent aminotransferase family. As to quaternary structure, homodimer. Requires pyridoxal 5'-phosphate as cofactor.

It is found in the cytoplasm. The catalysed reaction is L-aspartate + 2-oxoglutarate = oxaloacetate + L-glutamate. It catalyses the reaction L-cysteine + 2-oxoglutarate = 2-oxo-3-sulfanylpropanoate + L-glutamate. It carries out the reaction (2S)-2-aminobutanoate + 2-oxoglutarate = 2-oxobutanoate + L-glutamate. The enzyme catalyses 3-sulfino-L-alanine + 2-oxoglutarate = 3-sulfinopyruvate + L-glutamate. Its function is as follows. Biosynthesis of L-glutamate from L-aspartate or L-cysteine. Important regulator of levels of glutamate, the major excitatory neurotransmitter of the vertebrate central nervous system. Acts as a scavenger of glutamate in brain neuroprotection. The aspartate aminotransferase activity is involved in hepatic glucose synthesis during development and in adipocyte glyceroneogenesis. Using L-cysteine as substrate, regulates levels of mercaptopyruvate, an important source of hydrogen sulfide. Mercaptopyruvate is converted into H(2)S via the action of 3-mercaptopyruvate sulfurtransferase (3MST). Hydrogen sulfide is an important synaptic modulator and neuroprotectant in the brain. In addition, catalyzes (2S)-2-aminobutanoate, a by-product in the cysteine biosynthesis pathway. This chain is Aspartate aminotransferase, cytoplasmic, found in Homo sapiens (Human).